The sequence spans 343 residues: Phenylalanine--tRNA ligase alpha subunit (343 aa).

Position 256 (Glu-256) interacts with Mg(2+).

The protein belongs to the class-II aminoacyl-tRNA synthetase family. Phe-tRNA synthetase alpha subunit type 1 subfamily. Tetramer of two alpha and two beta subunits. Requires Mg(2+) as cofactor.

It is found in the cytoplasm. It catalyses the reaction tRNA(Phe) + L-phenylalanine + ATP = L-phenylalanyl-tRNA(Phe) + AMP + diphosphate + H(+). The polypeptide is Phenylalanine--tRNA ligase alpha subunit (Phytoplasma australiense).